A 197-amino-acid chain; its full sequence is Nucleoside triphosphate pyrophosphatase (197 aa).

Residue D72 is the Proton acceptor of the active site.

This sequence belongs to the Maf family. It depends on a divalent metal cation as a cofactor.

It is found in the cytoplasm. It carries out the reaction a ribonucleoside 5'-triphosphate + H2O = a ribonucleoside 5'-phosphate + diphosphate + H(+). It catalyses the reaction a 2'-deoxyribonucleoside 5'-triphosphate + H2O = a 2'-deoxyribonucleoside 5'-phosphate + diphosphate + H(+). In terms of biological role, nucleoside triphosphate pyrophosphatase. May have a dual role in cell division arrest and in preventing the incorporation of modified nucleotides into cellular nucleic acids. The protein is Nucleoside triphosphate pyrophosphatase of Corynebacterium efficiens (strain DSM 44549 / YS-314 / AJ 12310 / JCM 11189 / NBRC 100395).